The primary structure comprises 213 residues: Orotate phosphoribosyltransferase (213 aa).

Lys26 is a 5-phospho-alpha-D-ribose 1-diphosphate binding site. 34–35 (FF) contacts orotate. Residues 72–73 (YK), Arg99, Lys100, Lys103, His105, and 124–132 (DDVITAGTA) contribute to the 5-phospho-alpha-D-ribose 1-diphosphate site. The orotate site is built by Thr128 and Arg156.

The protein belongs to the purine/pyrimidine phosphoribosyltransferase family. PyrE subfamily. Homodimer. The cofactor is Mg(2+).

It catalyses the reaction orotidine 5'-phosphate + diphosphate = orotate + 5-phospho-alpha-D-ribose 1-diphosphate. It participates in pyrimidine metabolism; UMP biosynthesis via de novo pathway; UMP from orotate: step 1/2. Catalyzes the transfer of a ribosyl phosphate group from 5-phosphoribose 1-diphosphate to orotate, leading to the formation of orotidine monophosphate (OMP). The chain is Orotate phosphoribosyltransferase from Thioalkalivibrio sulfidiphilus (strain HL-EbGR7).